The sequence spans 485 residues: Glutamate--tRNA ligase (485 aa).

A 'HIGH' region motif is present at residues 11–21; sequence PSPTGHLHIGN. Residues 252-256 carry the 'KMSKS' region motif; sequence KLSKR. K255 serves as a coordination point for ATP.

The protein belongs to the class-I aminoacyl-tRNA synthetase family. Glutamate--tRNA ligase type 1 subfamily. In terms of assembly, monomer.

The protein resides in the cytoplasm. The catalysed reaction is tRNA(Glu) + L-glutamate + ATP = L-glutamyl-tRNA(Glu) + AMP + diphosphate. In terms of biological role, catalyzes the attachment of glutamate to tRNA(Glu) in a two-step reaction: glutamate is first activated by ATP to form Glu-AMP and then transferred to the acceptor end of tRNA(Glu). The polypeptide is Glutamate--tRNA ligase (Bacillus licheniformis (strain ATCC 14580 / DSM 13 / JCM 2505 / CCUG 7422 / NBRC 12200 / NCIMB 9375 / NCTC 10341 / NRRL NRS-1264 / Gibson 46)).